The sequence spans 284 residues: 2-dehydro-3-deoxyphosphooctonate aldolase (284 aa).

Belongs to the KdsA family.

It localises to the cytoplasm. The enzyme catalyses D-arabinose 5-phosphate + phosphoenolpyruvate + H2O = 3-deoxy-alpha-D-manno-2-octulosonate-8-phosphate + phosphate. Its pathway is carbohydrate biosynthesis; 3-deoxy-D-manno-octulosonate biosynthesis; 3-deoxy-D-manno-octulosonate from D-ribulose 5-phosphate: step 2/3. The protein operates within bacterial outer membrane biogenesis; lipopolysaccharide biosynthesis. The chain is 2-dehydro-3-deoxyphosphooctonate aldolase from Aliivibrio salmonicida (strain LFI1238) (Vibrio salmonicida (strain LFI1238)).